We begin with the raw amino-acid sequence, 256 residues long: Trans-aconitate 2-methyltransferase (256 aa).

It belongs to the methyltransferase superfamily. Tam family.

Its subcellular location is the cytoplasm. It carries out the reaction trans-aconitate + S-adenosyl-L-methionine = (E)-3-(methoxycarbonyl)pent-2-enedioate + S-adenosyl-L-homocysteine. Functionally, catalyzes the S-adenosylmethionine monomethyl esterification of trans-aconitate. The protein is Trans-aconitate 2-methyltransferase of Afipia carboxidovorans (strain ATCC 49405 / DSM 1227 / KCTC 32145 / OM5) (Oligotropha carboxidovorans).